The chain runs to 406 residues: Plasma serine protease inhibitor (406 aa).

Residues 1-19 form the signal peptide; the sequence is MQLFLLLCLVLLSPQGASL. A propeptide spans 20–25 (removed in mature form); sequence HRHHPR. Thr39 is a glycosylation site (O-linked (GalNAc...) threonine). Asn249, Asn262, and Asn338 each carry an N-linked (GlcNAc...) asparagine glycan.

The protein belongs to the serpin family. Forms protease inhibiting heterodimers in extracellular body fluids with serine proteases such as activated protein C/coagulation factor V/F5, acrosin/ACR, chymotrypsinogen B/CTRB1, prothrombin/F2, factor Xa/F10, factor XI/F11, kallikrein/KLKB1, tissue kallikrein, trypsin/PRSS1, prostate specific antigen/KLK3, tissue plasminogen activator/PLAT and urinary plasminogen activator/PLAU. Forms membrane-anchored serine proteases inhibiting heterodimers with TMPRSS7 and TMPRSS11E. Interacts with SEMG2. Post-translationally, N- and O-glycosylated. N-glycosylation consists of a mixture of sialylated bi- (including sialyl-Lewis X epitopes), tri- and tetra-antennary complex-type chains; affects the maximal heparin- and thrombomodulin-enhanced rates of thrombin inhibition. O-glycosylated with core 1 or possibly core 8 glycans. Further modified with 2 sialic acid residues. In terms of processing, proteolytically cleaved. Inhibition of proteases is accompanied by formation of a stable enzyme-inhibitor complex and by degradation of the serpin to lower molecular weight derivatives. Proteolytically cleaved at the N-terminus; inhibits slightly the heparin- and thrombomodulin-enhanced rates of thrombin inhibition. In terms of tissue distribution, predominantly expressed in the epithelium of seminal vesicles. Expressed in the proximal tubular epithelium of the kidney. Expressed in the superficial and more differentiated epidermal keratinocytes of the skin. Expressed in megakaryocytes and platelets. Expressed poorly in kidney tumor cells compared to non tumor kidney tissues. Expressed in spermatozoa. Present in very high concentration in seminal plasma. Present in high concentration in plasma, synovial and Graaf follicle fluids. Present in low concentration in breast milk and in amniotic fluids. Present in very low concentration in urine, cerebrospinal fluids, saliva and tears (at protein level). Strongly expressed in liver. Expressed in kidney, spleen, pancreas, skeletal muscle, heart, testes, ovary, interstitial Leydig cells, epididymal glands, seminal vesicles and prostate.

The protein resides in the secreted. It localises to the extracellular space. With respect to regulation, its inhibitory activity is greatly enhanced in the presence of glycosaminoglycans, heparin, thrombomodulin and phospholipids vesicles. Heparin-dependent serine protease inhibitor acting in body fluids and secretions. Inactivates serine proteases by binding irreversibly to their serine activation site. Involved in the regulation of intravascular and extravascular proteolytic activities. Plays hemostatic roles in the blood plasma. Acts as a procoagulant and pro-inflammatory factor by inhibiting the anticoagulant activated protein C factor as well as the generation of activated protein C factor by the thrombin/thrombomodulin complex. Acts as an anticoagulant factor by inhibiting blood coagulation factors like prothrombin, factor XI, factor Xa, plasma kallikrein and fibrinolytic enzymes such as tissue- and urinary-type plasminogen activators. In seminal plasma, inactivates several serine proteases implicated in the reproductive system. Inhibits the serpin acrosin; indirectly protects component of the male genital tract from being degraded by excessive released acrosin. Inhibits tissue- and urinary-type plasminogen activator, prostate-specific antigen and kallikrein activities; has a control on the sperm motility and fertilization. Inhibits the activated protein C-catalyzed degradation of SEMG1 and SEMG2; regulates the degradation of semenogelin during the process of transfer of spermatozoa from the male reproductive tract into the female tract. In urine, inhibits urinary-type plasminogen activator and kallikrein activities. Inactivates membrane-anchored serine proteases activities such as MPRSS7 and TMPRSS11E. Inhibits urinary-type plasminogen activator-dependent tumor cell invasion and metastasis. May also play a non-inhibitory role in seminal plasma and urine as a hydrophobic hormone carrier by its binding to retinoic acid. This Homo sapiens (Human) protein is Plasma serine protease inhibitor (SERPINA5).